The chain runs to 323 residues: Cytochrome c biogenesis protein CcsA (323 aa).

8 helical membrane passes run 9 to 29, 45 to 62, 71 to 91, 98 to 118, 143 to 163, 227 to 247, 261 to 275, and 285 to 305; these read ILTH…LLNL, MMAT…RWIY, LYES…VPYF, LSAI…SGLL, MLLG…LLVI, IISL…VWAN, TWAF…IYLH, and VGPA…YFGV.

This sequence belongs to the CcmF/CycK/Ccl1/NrfE/CcsA family. May interact with Ccs1.

Its subcellular location is the plastid. The protein localises to the chloroplast thylakoid membrane. Its function is as follows. Required during biogenesis of c-type cytochromes (cytochrome c6 and cytochrome f) at the step of heme attachment. This Calycanthus floridus var. glaucus (Eastern sweetshrub) protein is Cytochrome c biogenesis protein CcsA.